The primary structure comprises 942 residues: UvrABC system protein A (942 aa).

Position 32-39 (32-39 (GLSGSGKS)) interacts with ATP. The segment at 251–278 (CPVCGFTVPELEPRLFSFNAPFGSCPTC) adopts a C4-type zinc-finger fold. 2 consecutive ABC transporter domains span residues 308–589 (WNPI…KKSI) and 609–937 (GNGR…HYLK). 641 to 648 (GVSGSGKS) contacts ATP. A C4-type zinc finger spans residues 740-766 (CEACSGDGIIKIEMHFLPDVYVPCEVC).

It belongs to the ABC transporter superfamily. UvrA family. Forms a heterotetramer with UvrB during the search for lesions.

Its subcellular location is the cytoplasm. The UvrABC repair system catalyzes the recognition and processing of DNA lesions. UvrA is an ATPase and a DNA-binding protein. A damage recognition complex composed of 2 UvrA and 2 UvrB subunits scans DNA for abnormalities. When the presence of a lesion has been verified by UvrB, the UvrA molecules dissociate. The chain is UvrABC system protein A from Streptococcus pyogenes serotype M3 (strain ATCC BAA-595 / MGAS315).